The sequence spans 205 residues: Putative 3-methyladenine DNA glycosylase (205 aa).

This sequence belongs to the DNA glycosylase MPG family.

This is Putative 3-methyladenine DNA glycosylase from Bacillus thuringiensis (strain Al Hakam).